An 825-amino-acid chain; its full sequence is Glycerol-3-phosphate acyltransferase (825 aa).

Positions 306 to 311 (CHRSHM) match the HXXXXD motif motif. A disordered region spans residues 802–825 (SASSSTEMEASTSSSQTAEETTQG).

This sequence belongs to the GPAT/DAPAT family.

The protein localises to the cell inner membrane. It carries out the reaction sn-glycerol 3-phosphate + an acyl-CoA = a 1-acyl-sn-glycero-3-phosphate + CoA. It functions in the pathway phospholipid metabolism; CDP-diacylglycerol biosynthesis; CDP-diacylglycerol from sn-glycerol 3-phosphate: step 1/3. This Pectobacterium atrosepticum (strain SCRI 1043 / ATCC BAA-672) (Erwinia carotovora subsp. atroseptica) protein is Glycerol-3-phosphate acyltransferase.